Reading from the N-terminus, the 1060-residue chain is Centrosomal protein of 131 kDa (1060 aa).

The span at 1-11 (MKGSRTITATP) shows a compositional bias: polar residues. Residues 1–96 (MKGSRTITAT…TGSPRPAEPT (96 aa)) form a disordered region. Positions 1–244 (MKGSRTITAT…SQSARGTTGL (244 aa)) are interaction with PLK4. Ser14 and Ser35 each carry phosphoserine. 2 stretches are compositionally biased toward polar residues: residues 32-50 (RPGS…SVAT) and 73-88 (LRRS…SWTG). A Phosphoserine; by MAPKAPK2 modification is found at Ser47. The residue at position 78 (Ser78) is a Phosphoserine; by MAPKAPK2 and PLK4. Phosphoserine is present on residues Ser89, Ser105, Ser114, Ser146, and Ser150. Disordered regions lie at residues 136-155 (LALP…LGPR) and 217-248 (EGGE…LRRR). Positions 217 to 226 (EGGEGSDLGK) are enriched in basic and acidic residues. Positions 263–283 (NQAAVTIQRWYRCQVQRRRAG) constitute an IQ domain. Composition is skewed to basic and acidic residues over residues 314–327 (EEAA…EKAR) and 344–363 (KASE…RAPE). The segment at 314-437 (EEAARKKARE…VSGSSRGKAR (124 aa)) is disordered. Over residues 398-408 (ASESSPEQWQS) the composition is skewed to low complexity. Positions 409–424 (PEDKPQDIHSQGEARQ) are enriched in basic and acidic residues. Thr473 carries the post-translational modification Phosphothreonine. Residue Ser481 is modified to Phosphoserine.

It belongs to the CEP131 family. In terms of assembly, self-associates. Associates with the centriolar satellite BBSome protein complex Interacts with BBS4; the interaction limits BBS4 availability for association with the BBSome complex, and hence negatively regulates ciliary localization of the BBSome complex. Interacts with MIB1. Interacts with PCM1; the interaction increases in response to ultraviolet light (UV) radiation. Associates with microtubule; association to microtubule is reduced in response to cellular stress, such as UV stimulation, in a process that requires p38 MAP kinase signaling. Interacts with CEP290, DCTN1, MAP1LC3B, PCNT, PCM1 and CEP152. Interacts with 14-3-3 proteins following UV-induced phosphorylation by MAPKAPK2; this inhibits formation of novel centriolar satellites. Interacts with SDCCAG8. Interacts with CCDC61. Interacts with PLK4. In terms of processing, ubiquitinated. Undergoes monoubiquitination catalyzed by the E3 ubiquitin-protein ligase MIB1 in proliferating cells, preventing cilia formation. Monoubiquitination by MIB1 is inhibited in response to cellular stress, such as ultraviolet light (UV) radiation or heat shock, resulting in ciliogenesis restoration. MAPKAPK2-dependent phosphorylation at Ser-47 and Ser-78 occurs in response to cellular stress such as exposure to ultraviolet irradiation and promotes binding to 14-3-3 proteins which leads to cytoplasmic sequestration of CEP131 and blocks formation of new centriolar satellites. Phosphorylation at Ser-78 mediated by PLK4 is essential for proper organization and integrity of centriolar satellites but is dispensable for its localization to centrioles and its function in ciliogenesis. As to expression, localized to the pre-acrosome region of round and elongated spermatids in testis but also present in ovary, brain and adipose tissue.

The protein localises to the cytoplasm. Its subcellular location is the cytoskeleton. It is found in the microtubule organizing center. The protein resides in the centrosome. It localises to the centriolar satellite. The protein localises to the centriole. Its subcellular location is the cilium basal body. It is found in the cytoplasmic vesicle. The protein resides in the secretory vesicle. It localises to the acrosome. Functionally, component of centriolar satellites contributing to the building of a complex and dynamic network required to regulate cilia/flagellum formation. In proliferating cells, MIB1-mediated ubiquitination induces its sequestration within centriolar satellites, precluding untimely cilia formation initiation. In contrast, during normal and ultraviolet or heat shock cellular stress-induced ciliogenesis, its non-ubiquitinated form is rapidly displaced from centriolar satellites and recruited to centrosome/basal bodies in a microtubule- and p38 MAPK-dependent manner. Also acts as a negative regulator of BBSome ciliary trafficking. Plays a role in sperm flagellar formation; may be involved in the regulation of intraflagellar transport (IFT) and/or intramanchette (IMT) trafficking, which are important for axoneme extension and/or cargo delivery to the nascent sperm tail. Required for optimal cell proliferation and cell cycle progression; may play a role in the regulation of genome stability and centriole duplication in non-ciliogenic cells. Involved in centriole duplication. Required for CEP152, WDR62 and CEP63 centrosomal localization and promotes the centrosomal localization of CDK2. Essential for maintaining proper centriolar satellite integrity. This chain is Centrosomal protein of 131 kDa (Cep131), found in Mus musculus (Mouse).